The chain runs to 301 residues: Isonocardicin synthase (301 aa).

Monomer.

The enzyme catalyses nocardicin G + S-adenosyl-L-methionine = isonocardicin C + S-methyl-5'-thioadenosine + H(+). It carries out the reaction nocardicin E + S-adenosyl-L-methionine = isonocardicin A + S-methyl-5'-thioadenosine + H(+). Its pathway is antibiotic biosynthesis. In terms of biological role, involved in the biosynthesis of the beta-lactam antibiotic nocardicin A. In the presence of S-adenosyl-L-methionine (AdoMet), catalyzes the transfer of a 3-amino-3-carboxypropyl group from AdoMet to nocardicin G, forming isonocardicin C. Can also catalyze the transformation of nocardicin E and F to isonocardicin A and B, respectively, but in vivo substrate is probably nocardicin G. This chain is Isonocardicin synthase, found in Nocardia uniformis subsp. tsuyamanensis.